Consider the following 255-residue polypeptide: Glioma pathogenesis-related protein 1 (255 aa).

Residues 1-17 form the signal peptide; sequence MQVILAVIVWMASSVSS. Residues 39–164 enclose the SCP domain; it reads QVHNQLRSKV…PNGANFICDY (126 aa). The helical transmembrane segment at 224–244 threads the bilayer; the sequence is SLFLIAKSVLLLLSVIITIWV.

It belongs to the CRISP family.

It localises to the membrane. This is Glioma pathogenesis-related protein 1 (Glipr1) from Mus musculus (Mouse).